The sequence spans 357 residues: Acyl-coenzyme A diphosphatase NUDT19 (357 aa).

Residues 10-242 (AATVMLAAGW…IWLAPPQFYE (233 aa)) enclose the Nudix hydrolase domain. Positions 72–93 (PRFGLGPEPPRQPPFPGLSHGD) are disordered. Residues 78 to 87 (PEPPRQPPFP) are compositionally biased toward pro residues. A Nudix box motif is present at residues 97 to 118 (AALPDDVALRICAIREAFEEAG). The Mg(2+) site is built by E112 and E116. Position 300 is an N6-succinyllysine (K300). Residues 355-357 (AHL) carry the Microbody targeting signal motif.

This sequence belongs to the Nudix hydrolase family. Monomer. Requires Mg(2+) as cofactor. It depends on Mn(2+) as a cofactor. In terms of tissue distribution, highly expressed in the kidneys, with lower levels in skeletal muscle and brain (at protein level).

Its subcellular location is the peroxisome. It carries out the reaction an acyl-CoA + H2O = an acyl-4'-phosphopantetheine + adenosine 3',5'-bisphosphate + 2 H(+). It catalyses the reaction CoA + H2O = (R)-4'-phosphopantetheine + adenosine 3',5'-bisphosphate + 2 H(+). The catalysed reaction is hexanoyl-CoA + H2O = hexanoyl-4'-phosphopantetheine + adenosine 3',5'-bisphosphate + 2 H(+). The enzyme catalyses octanoyl-CoA + H2O = S-octanoyl-4'-phosphopantetheine + adenosine 3',5'-bisphosphate + 2 H(+). It carries out the reaction butanoyl-CoA + H2O = S-butanoyl-4'-phosphopantetheine + adenosine 3',5'-bisphosphate + 2 H(+). It catalyses the reaction propanoyl-CoA + H2O = propanoyl-4'-phosphopantetheine + adenosine 3',5'-bisphosphate + 2 H(+). The catalysed reaction is malonyl-CoA + H2O = malonyl-4'-phosphopantetheine + adenosine 3',5'-bisphosphate + 2 H(+). The enzyme catalyses succinyl-CoA + H2O = succinyl-4'-phosphopantetheine + adenosine 3',5'-bisphosphate + 2 H(+). It carries out the reaction choloyl-CoA + H2O = S-choloyl-4'-phosphopantetheine + adenosine 3',5'-bisphosphate + 2 H(+). It catalyses the reaction 4,8-dimethylnonanoyl-CoA + H2O = S-(4,8-dimethylnonanoyl)-4'-phosphopantetheine + adenosine 3',5'-bisphosphate + 2 H(+). The catalysed reaction is (9Z,12Z,15Z)-octadecatrienoyl-CoA + H2O = S-(9Z,12Z,15Z-octadecatrienoyl)-4'-phosphopantetheine + adenosine 3',5'-bisphosphate + 2 H(+). The enzyme catalyses (9Z,12Z)-octadecadienoyl-CoA + H2O = S-(9Z,12Z-octadecadienoyl)-4'-phosphopantetheine + adenosine 3',5'-bisphosphate + 2 H(+). It carries out the reaction (9Z)-hexadecenoyl-CoA + H2O = S-(9Z-hexadecenoyl)-4'-phosphopantetheine + adenosine 3',5'-bisphosphate + 2 H(+). It catalyses the reaction (9Z)-tetradecenoyl-CoA + H2O = S-(9Z-tetradecenoyl)-4'-phosphopantetheine + adenosine 3',5'-bisphosphate + 2 H(+). The catalysed reaction is (6Z)-octenoyl-CoA + H2O = S-(6Z-octenoyl)-4'-phosphopantetheine + adenosine 3',5'-bisphosphate + 2 H(+). The enzyme catalyses hexadecanoyl-CoA + H2O = S-hexadecanoyl-4'-phosphopantetheine + adenosine 3',5'-bisphosphate + 2 H(+). It carries out the reaction tetradecanoyl-CoA + H2O = tetradecanoyl-4'-phosphopantetheine + adenosine 3',5'-bisphosphate + 2 H(+). It catalyses the reaction dodecanoyl-CoA + H2O = S-dodecanoyl-4'-phosphopantetheine + adenosine 3',5'-bisphosphate + 2 H(+). The catalysed reaction is a 5'-end CoA-ribonucleoside in mRNA + H2O = a 5'-end phospho-adenosine-phospho-ribonucleoside in mRNA + (R)-4'-phosphopantetheine + 2 H(+). With respect to regulation, inhibited by chenodeoxycholic acid (CDCA) and its conjugated derivatives, taurochenodeoxycholic acid and glycochenodeoxycholic acid. Inhibited by fluoride. Fatty acyl-coenzyme A (CoA) diphosphatase that hydrolyzes fatty acyl-CoA to yield acyl-4'-phosphopantetheine and adenosine 3',5'-bisphosphate. Mediates the hydrolysis of a wide range of CoA esters, including choloyl-CoA and branched-chain fatty-acyl-CoA esters and at low substrate concentrations medium and long-chain fatty-acyl-CoA esters are the primary substrates. Highest activity seen with medium-chain acyl-CoA esters and higher rates of activity seen with the unsaturated acyl-CoA esters compared with the saturated esters. Exhibits decapping activity towards dpCoA-capped RNAs in vitro. This chain is Acyl-coenzyme A diphosphatase NUDT19 (Nudt19), found in Mus musculus (Mouse).